Here is an 891-residue protein sequence, read N- to C-terminus: MNKPQTPMMRQYLSIKAKYKDEILFFRLGDFYEMFFDEAVEVSRILNLTLTKRNDVPMCGIPYHAAKIYIARLLRAGKKIAICEQVTEPVAGGLTERKVVEVITPGTVAEDDFLEQGSNNYLAAVYCSNKKTEGNSGFDYYAGLAYIDVTTGNFFATSFPKTDFKEQFLKEIGRINPKEILIQQSIQNEFPALKQILSEFPSMMQNFYPDWSFNPDQAEKRLCSTFGTENLKGFLLNTDSPEVPPAGLLLQYLEEISGRDISHISGIKIYAESDFVSLDDSTRKNLELLTNLRDNSPSYSLFESVNYTKTAMGTRLLRRRISYPLRSKNEIDKRLDKVNSLFKDGKASAIIRETLSSILDIERLSGRIAMQKTHGKDLLALKQSLNSVIRMGSLIEEKKLNFLQLNDEEKKLLTEIRDLLENSIDDDCTIALNDGKLIKKGFSKKVDTIKNIKENAHEILEKYLDDERKKTGINNLKIKYNRMMGYFLEVSLGNISAVPDYFIRQRSLSNADRFTTESLKQIEDNINNSEERLIEAEKEVFDEVCTEIGSHHCFLQKLAEEVAELDVNQSFAQAAVLHAWTRPELCSDSGILNITGGRHPVVENHLRAGDFVPNSIKLLSGENSNPEDETIPSFAVITGPNMAGKSTFLRQTALICLLAQIGSFVPAEKAVLSPVDKIFCRVGATDNLARGESTFLVEMIETAYILNSATRNSLVIMDEVGRGTSMEDGLAIAQAVSEHLLNTIKAKTLFATHYHELTRLEHEKIINLKLDVLEAEGKIVFLKKVVHGAAGNSYGIHVAGLAGIPQSVLTRAENLLYMRSQFQKERTIQEARPSAQGSEEKTPSSPAEKGLSLFPEEELILNEILSTDPDETAPIKALQLIASWKNRLSGK.

639 to 646 (GPNMAGKS) contacts ATP. Residues 827 to 854 (TIQEARPSAQGSEEKTPSSPAEKGLSLF) are disordered.

This sequence belongs to the DNA mismatch repair MutS family.

In terms of biological role, this protein is involved in the repair of mismatches in DNA. It is possible that it carries out the mismatch recognition step. This protein has a weak ATPase activity. This chain is DNA mismatch repair protein MutS, found in Treponema denticola (strain ATCC 35405 / DSM 14222 / CIP 103919 / JCM 8153 / KCTC 15104).